Consider the following 653-residue polypeptide: Probable potassium transport system protein Kup (653 aa).

Transmembrane regions (helical) follow at residues 37–57 (ALLA…SPLY), 79–99 (VLSL…LLLV), 134–154 (ITLG…TPAI), 168–188 (AVFD…LFLV), 196–216 (IGAV…GLGV), 243–263 (LHGF…EALY), 278–298 (WFSM…ALLL), 320–340 (LVAL…AGVF), 368–388 (IYLP…VLGF), 397–417 (AYGI…YVVA), 426–446 (WVAI…FGAN), and 450–470 (VADG…LMTT).

Belongs to the HAK/KUP transporter (TC 2.A.72) family.

The protein resides in the cell inner membrane. It carries out the reaction K(+)(in) + H(+)(in) = K(+)(out) + H(+)(out). Functionally, transport of potassium into the cell. Likely operates as a K(+):H(+) symporter. The sequence is that of Probable potassium transport system protein Kup from Myxococcus xanthus (strain DK1622).